A 693-amino-acid polypeptide reads, in one-letter code: Elongation factor G 1 (693 aa).

Residues 4–281 (NKLRNIGISA…AVTRFLPSPH (278 aa)) form the tr-type G domain. Residues 13–20 (AHIDSGKT), 80–84 (DTPGH), and 134–137 (NKCD) each bind GTP.

Belongs to the TRAFAC class translation factor GTPase superfamily. Classic translation factor GTPase family. EF-G/EF-2 subfamily.

Its subcellular location is the cytoplasm. Its function is as follows. Catalyzes the GTP-dependent ribosomal translocation step during translation elongation. During this step, the ribosome changes from the pre-translocational (PRE) to the post-translocational (POST) state as the newly formed A-site-bound peptidyl-tRNA and P-site-bound deacylated tRNA move to the P and E sites, respectively. Catalyzes the coordinated movement of the two tRNA molecules, the mRNA and conformational changes in the ribosome. In Borreliella burgdorferi (strain ATCC 35210 / DSM 4680 / CIP 102532 / B31) (Borrelia burgdorferi), this protein is Elongation factor G 1 (fusA).